The following is a 735-amino-acid chain: 1,4-alpha-glucan branching enzyme GlgB 1 (735 aa).

Asp-418 acts as the Nucleophile in catalysis. The active-site Proton donor is the Glu-471.

The protein belongs to the glycosyl hydrolase 13 family. GlgB subfamily. As to quaternary structure, monomer.

The enzyme catalyses Transfers a segment of a (1-&gt;4)-alpha-D-glucan chain to a primary hydroxy group in a similar glucan chain.. It participates in glycan biosynthesis; glycogen biosynthesis. Catalyzes the formation of the alpha-1,6-glucosidic linkages in glycogen by scission of a 1,4-alpha-linked oligosaccharide from growing alpha-1,4-glucan chains and the subsequent attachment of the oligosaccharide to the alpha-1,6 position. The sequence is that of 1,4-alpha-glucan branching enzyme GlgB 1 from Rhizobium etli (strain ATCC 51251 / DSM 11541 / JCM 21823 / NBRC 15573 / CFN 42).